Here is a 101-residue protein sequence, read N- to C-terminus: Small ribosomal subunit protein uS14 (101 aa).

Belongs to the universal ribosomal protein uS14 family. As to quaternary structure, part of the 30S ribosomal subunit. Contacts proteins S3 and S10.

Binds 16S rRNA, required for the assembly of 30S particles and may also be responsible for determining the conformation of the 16S rRNA at the A site. In Haemophilus ducreyi (strain 35000HP / ATCC 700724), this protein is Small ribosomal subunit protein uS14.